We begin with the raw amino-acid sequence, 751 residues long: MTSAVELTDDLVKEYLTFRGFTNTLKYFEVDIKADKDKGFRVDRIVEQLLQFVQSYDLNGLVEYWAYLERRLFSRLEDVYRPTIHKLKTSLFRYYLVYTIQSSRTDKAHEFFQKQATELQNQAEWKEWFALPFLPTPDSNRTFSTYFSRQWADTFTVSLHNFLSVLFQCMPVPKILTFQSDYQKIACLQEENEIMRQKLFALQAETYRLRKDGPSEPLVLHKLPHYVSNMDRLGDSELGSNIMSSHSNTNMNTPSQRTSGFLSSLLAQNKKPPPPKSTLPSVSSPTQSGGSVPLKKEVAVSQAQKAKELVGGTKEVRSSPNILGVPGTESSMVQQRHKRQQERKELLSKTASQVSTEKKAENSDADPDLRSDTQNDTVDAVTRGSGASGARKEEKPAQPFIVLSQDEYAEHHSSIMHCRVDCSGRRVASLDVDGVIKIWSLDGIMQTKASAISKSALLSLEWATKRDRLLLLGSEVGTVRLYDTEAKKNLCEIGIVEDMPRILSLACSPSGASFVCSAAAATSPSQTDPTYYSYGESGNNQVPGKLLLWDTKTMKQQLQFSLEPVPIAVNCTAFNHNGNLLVTGAADGFIRLFDMQQHQCALSWKAHMGEVYSVDFSYDENAVYSIGEDGKFIQWDIHKSGQKVSEYSLPSDATGPFMLSGYSGYKQVQFPRGRLFAFDSEGKYMLTCSSTGGVIYKLNSDGSTLENCLSLGGHRAPVVTVDWSTAVECGTCLTASMDGKIKLTTLLAQKS.

Residues 183-205 adopt a coiled-coil conformation; the sequence is QKIACLQEENEIMRQKLFALQAE. The interval 237–398 is disordered; the sequence is ELGSNIMSSH…GARKEEKPAQ (162 aa). The segment covering 238 to 267 has biased composition (polar residues); it reads LGSNIMSSHSNTNMNTPSQRTSGFLSSLLA. The span at 356–373 shows a compositional bias: basic and acidic residues; sequence TEKKAENSDADPDLRSDT. WD repeat units follow at residues 410–449, 452–492, 517–559, 564–603, 606–645, 668–706, and 713–751; these read EHHS…QTKA, ISKS…NLCE, SAAA…QQLQ, PVPI…CALS, AHMG…QKVS, VQFP…STLE, and GHRA…AQKS.

It belongs to the WD repeat WDR91 family.

The protein localises to the early endosome membrane. The protein resides in the late endosome membrane. Its function is as follows. Functions as a negative regulator of the PI3 kinase/PI3K activity associated with endosomal membranes. By modifying the phosphatidylinositol 3-phosphate/PtdInsP3 content of endosomal membranes may regulate endosome fusion, recycling, sorting and early to late endosome transport. The sequence is that of WD repeat-containing protein 91 from Xenopus tropicalis (Western clawed frog).